Consider the following 77-residue polypeptide: Anionic peptide 17.1 (77 aa).

An N-terminal signal peptide occupies residues 1-24 (MASKTVLVLLLVSVLVSTFCTAKA).

The protein belongs to the non-disulfide-bridged peptide (NDBP) superfamily. Long chain multifunctional peptide (group 2) family. Expressed by the venom gland.

It localises to the secreted. The polypeptide is Anionic peptide 17.1 (Lychas mucronatus (Chinese swimming scorpion)).